We begin with the raw amino-acid sequence, 253 residues long: Blue-light photoreceptor (253 aa).

The PAS domain maps to 6–79; that stretch reads QFDVILKALN…AKIRHAINEK (74 aa). Cys56 carries the S-4a-FMN cysteine modification. In terms of domain architecture, PAC spans 80-133; the sequence is STANVLLKNYRKDGTSFMNELTIEPIYDDHEHLYFVGIQKDVTTEHDYQLELEK. The STAS domain occupies 142 to 253; it reads STPIVPIKEN…STIKEALQFY (112 aa).

In terms of processing, FMN binds covalently to cysteine after exposure to blue light and this bond is spontaneously broken in the dark.

Exhibits the same spectroscopical features and blue-light induced photochemistry as plants phototropins, with the reversible formation of a blue-shifted photoproduct, assigned to an FMN-cysteine thiol adduct. Positive regulator in the activation of the general stress transcription factor sigma-B. The protein is Blue-light photoreceptor of Listeria monocytogenes serovar 1/2a (strain ATCC BAA-679 / EGD-e).